Consider the following 424-residue polypeptide: Arginine biosynthesis bifunctional protein ArgJ (424 aa).

Threonine 172, lysine 198, threonine 209, glutamate 296, asparagine 419, and serine 424 together coordinate substrate. The Nucleophile role is filled by threonine 209.

It belongs to the ArgJ family. In terms of assembly, heterotetramer of two alpha and two beta chains.

Its subcellular location is the cytoplasm. It catalyses the reaction N(2)-acetyl-L-ornithine + L-glutamate = N-acetyl-L-glutamate + L-ornithine. The enzyme catalyses L-glutamate + acetyl-CoA = N-acetyl-L-glutamate + CoA + H(+). Its pathway is amino-acid biosynthesis; L-arginine biosynthesis; L-ornithine and N-acetyl-L-glutamate from L-glutamate and N(2)-acetyl-L-ornithine (cyclic): step 1/1. It participates in amino-acid biosynthesis; L-arginine biosynthesis; N(2)-acetyl-L-ornithine from L-glutamate: step 1/4. In terms of biological role, catalyzes two activities which are involved in the cyclic version of arginine biosynthesis: the synthesis of N-acetylglutamate from glutamate and acetyl-CoA as the acetyl donor, and of ornithine by transacetylation between N(2)-acetylornithine and glutamate. In Gluconobacter oxydans (strain 621H) (Gluconobacter suboxydans), this protein is Arginine biosynthesis bifunctional protein ArgJ.